A 260-amino-acid polypeptide reads, in one-letter code: 4-hydroxy-tetrahydrodipicolinate reductase (260 aa).

Residues 8-13 (GAAGRM), Glu35, 91-93 (GTT), and 115-118 (APNM) contribute to the NAD(+) site. His148 (proton donor/acceptor) is an active-site residue. His149 is a binding site for (S)-2,3,4,5-tetrahydrodipicolinate. Catalysis depends on Lys152, which acts as the Proton donor. 158 to 159 (GT) is a (S)-2,3,4,5-tetrahydrodipicolinate binding site.

This sequence belongs to the DapB family.

It is found in the cytoplasm. The enzyme catalyses (S)-2,3,4,5-tetrahydrodipicolinate + NAD(+) + H2O = (2S,4S)-4-hydroxy-2,3,4,5-tetrahydrodipicolinate + NADH + H(+). The catalysed reaction is (S)-2,3,4,5-tetrahydrodipicolinate + NADP(+) + H2O = (2S,4S)-4-hydroxy-2,3,4,5-tetrahydrodipicolinate + NADPH + H(+). It functions in the pathway amino-acid biosynthesis; L-lysine biosynthesis via DAP pathway; (S)-tetrahydrodipicolinate from L-aspartate: step 4/4. Its function is as follows. Catalyzes the conversion of 4-hydroxy-tetrahydrodipicolinate (HTPA) to tetrahydrodipicolinate. This Rubrobacter xylanophilus (strain DSM 9941 / JCM 11954 / NBRC 16129 / PRD-1) protein is 4-hydroxy-tetrahydrodipicolinate reductase.